A 196-amino-acid polypeptide reads, in one-letter code: MKLNNFIDFSSILELNYNDFLPLDDNHKSYTYEDNIQLQDDSEARFLIQRAKDSLLSHTKIKDKYIRPKCEWDECEYSCKFYLSTDRKFYCVYFSYDLDFTILYFYGIIEKKTGKHLVVSHEETSDNVYPMMNHHMFNYEWDNYEHEDLRYPPYKYEDDPLELICCLEDQFNVFYEEMCKKNYNDNGSDDSNDDND.

Belongs to the mimivirus R24/R907 family.

This is an uncharacterized protein from Acanthamoeba polyphaga (Amoeba).